The sequence spans 275 residues: Protein rolling stone (275 aa).

Helical transmembrane passes span 45–65, 72–92, 127–147, 162–182, 185–205, and 232–252; these read LLYR…CVIV, FFIY…LISA, WLYN…WVFL, IITH…IAFP, ILHM…TLIY, and MVTF…LFGL.

As to expression, expressed in cells of the somatic mesoderm, most notably the muscle founder cells, between embryonic stages 12 and 14, in growing muscle fibers in dorsal, lateral and ventral positions. At stage 16 strongest expression is in some ventral muscles and muscle 8. At stages 16/17 expression is restricted to some cells of the CNS, the brain and the gonads.

The protein localises to the membrane. Its function is as follows. May have a central role in the fusion process during myogenesis, within the somatic mesoderm. The chain is Protein rolling stone (rost) from Drosophila melanogaster (Fruit fly).